We begin with the raw amino-acid sequence, 413 residues long: Lamin tail domain-containing protein 1 (413 aa).

Disordered regions lie at residues 1 to 25 (MMKEASEPLASVTSINKQDSKVQDG) and 102 to 128 (HKDSSLGKQSTSSMVPRRQPQSSSDVD). Over residues 107–128 (LGKQSTSSMVPRRQPQSSSDVD) the composition is skewed to polar residues. Residues 169–287 (EVGQFTSSSL…EAIAWYTPIH (119 aa)) enclose the LTD domain. The tract at residues 356–413 (LPNKSPWCRNPNTSPHPYSSLIDSHDSDISESSLDTQLKPQPTKPKPDPGTKKKKAKS) is disordered. Over residues 385 to 396 (SESSLDTQLKPQ) the composition is skewed to low complexity.

Belongs to the intermediate filament family.

This is Lamin tail domain-containing protein 1 (Lmntd1) from Mus musculus (Mouse).